A 226-amino-acid chain; its full sequence is uncharacterized protein (226 aa).

Residues 121–141 (YLIGNIIGLPLTIPFILIPLI) form a helical membrane-spanning segment.

It to yeast YDL183c.

The protein localises to the membrane. This is an uncharacterized protein from Schizosaccharomyces pombe (strain 972 / ATCC 24843) (Fission yeast).